Consider the following 296-residue polypeptide: MMFKQYLQVTKPGIIFGNLISVIGGFLLASKGSINYPLFIYTLVGVSLVVASGCVFNNYIDRDIDRKMERTKNRVLVKGLISPAVSLVYATLLGIAGFMLLWFGANPLACWLGVMGFVVYVGIYSLYMKRHSVYGTLIGSLSGAAPPVIGYCAVTGEFDSGALILLAIFSLWQMPHSYAIAIFRFKDYQAANIPVLPVVKGISVAKNHITLYIIAFAVATLMLSLGGYAGYKYLVVAAAVSVWWLGMALRGYKVEDDKVWARKLFGFSIIAITALSVMMSVDFMVPDSHSLLASVW.

A run of 9 helical transmembrane segments spans residues 9–29 (VTKPGIIFGNLISVIGGFLLA), 36–56 (YPLFIYTLVGVSLVVASGCVF), 84–104 (AVSLVYATLLGIAGFMLLWFG), 108–128 (LACWLGVMGFVVYVGIYSLYM), 133–153 (VYGTLIGSLSGAAPPVIGYCA), 163–183 (LILLAIFSLWQMPHSYAIAIF), 209–229 (ITLYIIAFAVATLMLSLGGYA), 234–254 (LVVAAAVSVWWLGMALRGYKV), and 265–285 (FGFSIIAITALSVMMSVDFMV).

It belongs to the UbiA prenyltransferase family. Protoheme IX farnesyltransferase subfamily.

Its subcellular location is the cell inner membrane. The enzyme catalyses heme b + (2E,6E)-farnesyl diphosphate + H2O = Fe(II)-heme o + diphosphate. It functions in the pathway porphyrin-containing compound metabolism; heme O biosynthesis; heme O from protoheme: step 1/1. In terms of biological role, converts heme B (protoheme IX) to heme O by substitution of the vinyl group on carbon 2 of heme B porphyrin ring with a hydroxyethyl farnesyl side group. The chain is Protoheme IX farnesyltransferase from Citrobacter koseri (strain ATCC BAA-895 / CDC 4225-83 / SGSC4696).